A 327-amino-acid chain; its full sequence is Zinc transport protein ZntB (327 aa).

Topologically, residues 1–273 (MEAIKGSDVN…ARRTYTMSLM (273 aa)) are cytoplasmic. Residues 274 to 294 (AMVFLPSTFLTGLFGVNLGGI) form a helical membrane-spanning segment. The Periplasmic portion of the chain corresponds to 295–300 (PGGGWR). A helical transmembrane segment spans residues 301–321 (FGFSLFCILLVVLIGGVTLWL). The Cytoplasmic portion of the chain corresponds to 322 to 327 (HRSKWL).

Belongs to the CorA metal ion transporter (MIT) (TC 1.A.35) family.

It localises to the cell inner membrane. It carries out the reaction Zn(2+)(out) + H(+)(out) = Zn(2+)(in) + H(+)(in). Zinc transporter. Acts as a Zn(2+):proton symporter, which likely mediates zinc ion uptake. The protein is Zinc transport protein ZntB of Salmonella enteritidis PT4 (strain P125109).